The chain runs to 564 residues: MAFNFNWSPLMADAGFYTRAQDLLTAALNKSPKPPIIVDDIKVTELNLGSIPPDLEILEVGDLAEDRFRGIFKMSYNGDAFLTLKTRVQANPLNTFLVTRPSFASPKPLAAAAGLTIPLQITLSEFRLSGFVVLVFSKQKGITVVFRNDPLESLKVSSTFDSISFVRDYLQKAIEGQLRALFMDELPAIIHRLSLRLWVPEYRDRESESVNTLDQSSGPGQDPLASPPQDPVDASGNALNPSEVASLSLDSGVEIHSLFSQKNLLRLAALTDSQRTLSLFTPSIKDVVYRAWTASTELGDSNTLTSPASPVLSRAQSHIGSLHSFVDNASTISMQSGGSSNFSGHGLNLRSGRHPRPHGKKRKKRVVDLRRPKTTDDMESVSGESVFSSENATSAPTIFSSPAQFSEEKNDDPVTPPLAPQNDLHLPTIHERRRISQGEHTLTRRSVPSMSEVAQPSSSRNSAAMIADTWPDPDATPRNSIRLPSSDRANNPLTTAHLPSSAIQYPPPIPDNNDPRQQAWLSKMAAELARRIQEEKVGPSGSRPFPDFWDDHSREEIPPPAYGH.

Residues 1 to 208 (MAFNFNWSPL…VPEYRDRESE (208 aa)) form the SMP-LTD domain. Disordered stretches follow at residues 208–240 (ESVN…NALN), 336–397 (SGGS…SAPT), 404–423 (QFSE…PQND), 434–517 (RISQ…DPRQ), and 532–564 (IQEE…AYGH). The segment covering 209-219 (SVNTLDQSSGP) has biased composition (polar residues). A compositionally biased stretch (basic residues) spans 351–365 (SGRHPRPHGKKRKKR). The span at 366–376 (VVDLRRPKTTD) shows a compositional bias: basic and acidic residues. Residues 380–390 (SVSGESVFSSE) are compositionally biased toward low complexity. 2 stretches are compositionally biased toward polar residues: residues 438 to 462 (GEHT…SRNS) and 477 to 503 (PRNS…SSAI).

The protein belongs to the MDM34 family. As to quaternary structure, component of the ER-mitochondria encounter structure (ERMES) or MDM complex, composed of mmm1, mdm10, mdm12 and mdm34.

The protein localises to the mitochondrion outer membrane. Functionally, component of the ERMES/MDM complex, which serves as a molecular tether to connect the endoplasmic reticulum (ER) and mitochondria. Components of this complex are involved in the control of mitochondrial shape and protein biogenesis, and function in nonvesicular lipid trafficking between the ER and mitochondria. Mdm34 is required for the interaction of the ER-resident membrane protein mmm1 and the outer mitochondrial membrane-resident beta-barrel protein mdm10. In Talaromyces stipitatus (strain ATCC 10500 / CBS 375.48 / QM 6759 / NRRL 1006) (Penicillium stipitatum), this protein is Mitochondrial distribution and morphology protein 34.